The chain runs to 202 residues: LexA repressor (202 aa).

A DNA-binding region (H-T-H motif) is located at residues 28–48 (RAEIAQQLGFRSPNAAEEHLK). Catalysis depends on for autocatalytic cleavage activity residues Ser-119 and Lys-156.

The protein belongs to the peptidase S24 family. As to quaternary structure, homodimer.

The catalysed reaction is Hydrolysis of Ala-|-Gly bond in repressor LexA.. In terms of biological role, represses a number of genes involved in the response to DNA damage (SOS response), including recA and lexA. Binds to the 16 bp palindromic sequence 5'-CTGTATATATATACAG-3'. In the presence of single-stranded DNA, RecA interacts with LexA causing an autocatalytic cleavage which disrupts the DNA-binding part of LexA, leading to derepression of the SOS regulon and eventually DNA repair. The protein is LexA repressor of Pectobacterium carotovorum subsp. carotovorum (strain PC1).